Here is a 174-residue protein sequence, read N- to C-terminus: Inosine/xanthosine triphosphatase (174 aa).

Asp-68 is a binding site for Mg(2+). A substrate-binding site is contributed by Asp-68–Ala-69.

Belongs to the YjjX NTPase family. Homodimer. The cofactor is Mg(2+). Mn(2+) is required as a cofactor.

The catalysed reaction is XTP + H2O = XDP + phosphate + H(+). It carries out the reaction ITP + H2O = IDP + phosphate + H(+). Functionally, phosphatase that hydrolyzes non-canonical purine nucleotides such as XTP and ITP to their respective diphosphate derivatives. Probably excludes non-canonical purines from DNA/RNA precursor pool, thus preventing their incorporation into DNA/RNA and avoiding chromosomal lesions. This is Inosine/xanthosine triphosphatase from Photobacterium profundum (strain SS9).